Reading from the N-terminus, the 760-residue chain is ATP-dependent zinc metalloprotease FtsH (760 aa).

At 1–5 (MNRKN) the chain is on the cytoplasmic side. Residues 6-26 (VTRTITAIAVVVLLGWSFFYF) form a helical membrane-spanning segment. The Extracellular segment spans residues 27–110 (SDDTRGYKPV…KVSTVVNQGS (84 aa)). Residues 111-131 (ILGELLVYVLPLLLLVGLFVM) traverse the membrane as a helical segment. At 132 to 760 (FSRMQGGARM…EVSRTKPAHG (629 aa)) the chain is on the cytoplasmic side. An ATP-binding site is contributed by 203–210 (GPPGTGKT). Histidine 425 contributes to the Zn(2+) binding site. Residue glutamate 426 is part of the active site. Zn(2+) is bound by residues histidine 429 and aspartate 501. Residues 616–760 (DFGGRIPSDK…EVSRTKPAHG (145 aa)) form a disordered region. Residues 650-669 (AFKAAIAQATQAAEAARSDA) show a composition bias toward low complexity. The segment covering 740 to 750 (GSDESSAEQDD) has biased composition (acidic residues).

The protein in the central section; belongs to the AAA ATPase family. It in the C-terminal section; belongs to the peptidase M41 family. Homohexamer. It depends on Zn(2+) as a cofactor.

It localises to the cell membrane. Its function is as follows. Acts as a processive, ATP-dependent zinc metallopeptidase for both cytoplasmic and membrane proteins. Plays a role in the quality control of integral membrane proteins. This is ATP-dependent zinc metalloprotease FtsH from Mycobacterium bovis (strain ATCC BAA-935 / AF2122/97).